The primary structure comprises 268 residues: Phosphate import ATP-binding protein PstB (268 aa).

The region spanning leucine 22–isoleucine 263 is the ABC transporter domain. An ATP-binding site is contributed by glycine 54–serine 61.

The protein belongs to the ABC transporter superfamily. Phosphate importer (TC 3.A.1.7) family. In terms of assembly, the complex is composed of two ATP-binding proteins (PstB), two transmembrane proteins (PstC and PstA) and a solute-binding protein (PstS).

It is found in the cell inner membrane. The enzyme catalyses phosphate(out) + ATP + H2O = ADP + 2 phosphate(in) + H(+). Functionally, part of the ABC transporter complex PstSACB involved in phosphate import. Responsible for energy coupling to the transport system. This Gluconobacter oxydans (strain 621H) (Gluconobacter suboxydans) protein is Phosphate import ATP-binding protein PstB.